A 30-amino-acid polypeptide reads, in one-letter code: Pyrrole-2-carboxylate oxygenase (30 aa).

In terms of assembly, homotrimer. The cofactor is FAD.

The catalysed reaction is pyrrole-2-carboxylate + NADH + O2 + H(+) = 5-hydroxypyrrole-2-carboxylate + NAD(+) + H2O. In terms of biological role, monooxygenase that initiates the degradation of pyrrole-2-carboxylate, which allows Arthrobacter sp. strain Py1 to grow on pyrrole-2-carboxylate as sole carbon, nitrogen, and energy source. To a lesser extent, can also use pyrrole, pyrrole-2-aldehyde, and indole-2-carboxylate as substrate. This Arthrobacter sp. (strain Py1) protein is Pyrrole-2-carboxylate oxygenase.